A 73-amino-acid chain; its full sequence is Antimicrobial peptide TsAP-2 (73 aa).

Positions 1–22 (MQIKHLITIFFLVLIVADHCHA) are cleaved as a signal peptide. Residue lysine 39 is modified to Lysine amide. A propeptide spanning residues 45 to 73 (EITSQIEQYRNLQKREAELENLLANLPVY) is cleaved from the precursor.

This sequence belongs to the non-disulfide-bridged peptide (NDBP) superfamily. Short antimicrobial peptide (group 4) family. As to expression, expressed by the venom gland.

Its subcellular location is the secreted. Its function is as follows. Antimicrobial peptide. Has a high antibacterial activity against the Gram-positive bacterium S.aureus (MIC=5-17.30 uM), the methicillin-resistant S.aureus (MRSA) (MIC=17.30 uM), and E.faecalis (MIC=69.23 uM). Has antifungal activity against Candida spp. and one Cryptococcus neoformans strains with MICs values ranging from 6.25 to 100 uM. Also shows an inhibitory activity on C.albicans biofilms at high concentrations. Has a moderate hemolytic potency (18% at 20 uM). Also inhibits the growth of the five human cancer cell lines tested (the squamous carcinoma cell line H157 (IC(50)=4.1 uM), the lung adenocarcinoma cell line H838 (11.0 uM), the breast carcinoma cell line MCF-7 (6.4 uM), the androgen-independent prostate adenocarcinoma cell line PC3 (13.3 uM) and the glioblastoma cell line U251-MG (15.4 uM)). In the model of polymicrobial sepsis, it exhibits an antibiotic effect, reducing the levels of microorganisms in the infectious focus and the inflammatory responses in the lung and cecum of septic animals. The protein is Antimicrobial peptide TsAP-2 of Tityus serrulatus (Brazilian scorpion).